A 318-amino-acid chain; its full sequence is Lipid A biosynthesis acyltransferase (318 aa).

The helical transmembrane segment at 27–47 (PQYWGIWLGIFFLLLLAFVPF) threads the bilayer. Residues 145 to 150 (HGWAID) carry the HXXXXD motif motif.

Belongs to the LpxL/LpxM/LpxP family. LpxM subfamily.

It is found in the cell inner membrane. The enzyme catalyses an alpha-Kdo-(2-&gt;4)-alpha-Kdo-(2-&gt;6)-(acyl)-lipid IVA + a fatty acyl-[ACP] = an alpha-Kdo-(2-&gt;4)-alpha-Kdo-(2-&gt;6)-lipid A + holo-[ACP]. It participates in glycolipid biosynthesis; KDO(2)-lipid A biosynthesis; KDO(2)-lipid A from CMP-3-deoxy-D-manno-octulosonate and lipid IV(A): step 4/4. It functions in the pathway bacterial outer membrane biogenesis; lipopolysaccharide biosynthesis. Its function is as follows. Catalyzes the transfer of an acyl chain from an acyl-[acyl-carrier-protein] (ACP) to a Kdo(2)-(acyl)-lipid IV(A) to form a Kdo(2)-lipid A. This chain is Lipid A biosynthesis acyltransferase, found in Haemophilus influenzae (strain ATCC 51907 / DSM 11121 / KW20 / Rd).